The chain runs to 75 residues: Cytochrome c oxidase subunit 6C (75 aa).

At methionine 1–glycine 13 the chain is on the mitochondrial matrix side. The helical transmembrane segment at leucine 14 to arginine 54 threads the bilayer. Residues asparagine 55 to lysine 75 are Mitochondrial intermembrane-facing.

The protein belongs to the cytochrome c oxidase subunit 6c family. Component of the cytochrome c oxidase (complex IV, CIV), a multisubunit enzyme composed of 14 subunits. The complex is composed of a catalytic core of 3 subunits MT-CO1, MT-CO2 and MT-CO3, encoded in the mitochondrial DNA, and 11 supernumerary subunits COX4I, COX5A, COX5B, COX6A, COX6B, COX6C, COX7A, COX7B, COX7C, COX8 and NDUFA4, which are encoded in the nuclear genome. The complex exists as a monomer or a dimer and forms supercomplexes (SCs) in the inner mitochondrial membrane with NADH-ubiquinone oxidoreductase (complex I, CI) and ubiquinol-cytochrome c oxidoreductase (cytochrome b-c1 complex, complex III, CIII), resulting in different assemblies (supercomplex SCI(1)III(2)IV(1) and megacomplex MCI(2)III(2)IV(2)).

It is found in the mitochondrion inner membrane. Its pathway is energy metabolism; oxidative phosphorylation. Component of the cytochrome c oxidase, the last enzyme in the mitochondrial electron transport chain which drives oxidative phosphorylation. The respiratory chain contains 3 multisubunit complexes succinate dehydrogenase (complex II, CII), ubiquinol-cytochrome c oxidoreductase (cytochrome b-c1 complex, complex III, CIII) and cytochrome c oxidase (complex IV, CIV), that cooperate to transfer electrons derived from NADH and succinate to molecular oxygen, creating an electrochemical gradient over the inner membrane that drives transmembrane transport and the ATP synthase. Cytochrome c oxidase is the component of the respiratory chain that catalyzes the reduction of oxygen to water. Electrons originating from reduced cytochrome c in the intermembrane space (IMS) are transferred via the dinuclear copper A center (CU(A)) of subunit 2 and heme A of subunit 1 to the active site in subunit 1, a binuclear center (BNC) formed by heme A3 and copper B (CU(B)). The BNC reduces molecular oxygen to 2 water molecules using 4 electrons from cytochrome c in the IMS and 4 protons from the mitochondrial matrix. The protein is Cytochrome c oxidase subunit 6C (COX6C) of Macaca silenus (Lion-tailed macaque).